Reading from the N-terminus, the 601-residue chain is Adenine deaminase (601 aa).

Belongs to the metallo-dependent hydrolases superfamily. Adenine deaminase family. Mn(2+) is required as a cofactor.

The enzyme catalyses adenine + H2O + H(+) = hypoxanthine + NH4(+). The chain is Adenine deaminase from Ruegeria sp. (strain TM1040) (Silicibacter sp.).